Here is a 102-residue protein sequence, read N- to C-terminus: Small ribosomal subunit protein uS10 (102 aa).

This sequence belongs to the universal ribosomal protein uS10 family. As to quaternary structure, part of the 30S ribosomal subunit.

Involved in the binding of tRNA to the ribosomes. This is Small ribosomal subunit protein uS10 from Methanoculleus marisnigri (strain ATCC 35101 / DSM 1498 / JR1).